Here is a 291-residue protein sequence, read N- to C-terminus: Secreted effector protein PipB (291 aa).

Pentapeptide repeat domains are found at residues Leu154–Gly193 and Ala199–Gly238.

The protein localises to the secreted. The protein resides in the host membrane. Effector proteins function to alter host cell physiology and promote bacterial survival in host tissues. Does not appear to be required for the formation or the maintenance of either Salmonella-containing vacuole (SCV) or the Salmonella-induced filaments (Sifs). Not required for intracellular replication in phagocytic cells. The chain is Secreted effector protein PipB (pipB) from Salmonella typhimurium (strain LT2 / SGSC1412 / ATCC 700720).